The primary structure comprises 347 residues: NADH-ubiquinone oxidoreductase chain 2 (347 aa).

9 consecutive transmembrane segments (helical) span residues 3 to 23 (PPIF…VLIS), 25 to 45 (HWLL…PILM), 59 to 79 (YFLT…INLL), 111 to 131 (FHFW…MILL), 149 to 169 (INPN…GWGG), 200 to 220 (LMHL…MLFM), 242 to 262 (LLIL…GFIP), 274 to 294 (NMII…YFYM), and 325 to 345 (LLPP…MMLI).

This sequence belongs to the complex I subunit 2 family. As to quaternary structure, core subunit of respiratory chain NADH dehydrogenase (Complex I) which is composed of 45 different subunits. Interacts with TMEM242.

It is found in the mitochondrion inner membrane. It catalyses the reaction a ubiquinone + NADH + 5 H(+)(in) = a ubiquinol + NAD(+) + 4 H(+)(out). In terms of biological role, core subunit of the mitochondrial membrane respiratory chain NADH dehydrogenase (Complex I) which catalyzes electron transfer from NADH through the respiratory chain, using ubiquinone as an electron acceptor. Essential for the catalytic activity and assembly of complex I. This is NADH-ubiquinone oxidoreductase chain 2 from Ailurus fulgens (Himalayan red panda).